Consider the following 266-residue polypeptide: UPF0246 protein PHZ_c0561 (266 aa).

Residues 245 to 266 (DEEFTFARPQPPPPAASRNKED) form a disordered region.

Belongs to the UPF0246 family.

This is UPF0246 protein PHZ_c0561 from Phenylobacterium zucineum (strain HLK1).